Here is a 209-residue protein sequence, read N- to C-terminus: Superoxide dismutase [Mn/Fe] (209 aa).

Residues His-38, His-90, Asp-172, and His-176 each coordinate Fe(3+). The Mn(2+) site is built by His-38, His-90, Asp-172, and His-176.

The protein belongs to the iron/manganese superoxide dismutase family. Mn(2+) is required as a cofactor. It depends on Fe(3+) as a cofactor.

The catalysed reaction is 2 superoxide + 2 H(+) = H2O2 + O2. Its function is as follows. Destroys superoxide anion radicals which are normally produced within the cells and which are toxic to biological systems. Catalyzes the dismutation of superoxide anion radicals into O2 and H2O2 by successive reduction and oxidation of the transition metal ion at the active site. This chain is Superoxide dismutase [Mn/Fe] (sodB), found in Rickettsia prowazekii (strain Madrid E).